Reading from the N-terminus, the 134-residue chain is D-ribose pyranase (134 aa).

His-20 (proton donor) is an active-site residue. Residues Asp-28, His-101, and 123–125 (YCN) contribute to the substrate site.

It belongs to the RbsD / FucU family. RbsD subfamily. In terms of assembly, homodecamer.

The protein localises to the cytoplasm. The enzyme catalyses beta-D-ribopyranose = beta-D-ribofuranose. It participates in carbohydrate metabolism; D-ribose degradation; D-ribose 5-phosphate from beta-D-ribopyranose: step 1/2. In terms of biological role, catalyzes the interconversion of beta-pyran and beta-furan forms of D-ribose. The chain is D-ribose pyranase from Pseudomonas fluorescens (strain ATCC BAA-477 / NRRL B-23932 / Pf-5).